Consider the following 376-residue polypeptide: Erythronate-4-phosphate dehydrogenase (376 aa).

The substrate site is built by Ser-45 and Thr-67. Residues 127–128, Asp-147, and Thr-176 contribute to the NAD(+) site; that span reads QV. The active site involves Arg-209. Asp-233 contributes to the NAD(+) binding site. Residue Glu-238 is part of the active site. His-255 functions as the Proton donor in the catalytic mechanism. Gly-258 provides a ligand contact to NAD(+). Tyr-259 is a binding site for substrate.

This sequence belongs to the D-isomer specific 2-hydroxyacid dehydrogenase family. PdxB subfamily. Homodimer.

Its subcellular location is the cytoplasm. The catalysed reaction is 4-phospho-D-erythronate + NAD(+) = (R)-3-hydroxy-2-oxo-4-phosphooxybutanoate + NADH + H(+). It functions in the pathway cofactor biosynthesis; pyridoxine 5'-phosphate biosynthesis; pyridoxine 5'-phosphate from D-erythrose 4-phosphate: step 2/5. Functionally, catalyzes the oxidation of erythronate-4-phosphate to 3-hydroxy-2-oxo-4-phosphonooxybutanoate. This chain is Erythronate-4-phosphate dehydrogenase, found in Aliivibrio salmonicida (strain LFI1238) (Vibrio salmonicida (strain LFI1238)).